Reading from the N-terminus, the 142-residue chain is Large ribosomal subunit protein uL13 (142 aa).

Belongs to the universal ribosomal protein uL13 family. Part of the 50S ribosomal subunit.

Functionally, this protein is one of the early assembly proteins of the 50S ribosomal subunit, although it is not seen to bind rRNA by itself. It is important during the early stages of 50S assembly. This chain is Large ribosomal subunit protein uL13, found in Burkholderia mallei (strain NCTC 10247).